The primary structure comprises 637 residues: Threonine--tRNA ligase (637 aa).

One can recognise a TGS domain in the interval 1–61; the sequence is MPVITLPNGS…EQDAALSIVT (61 aa). Positions 242-533 are catalytic; the sequence is DHRKLGKKFD…LIENYEGAFP (292 aa). 3 residues coordinate Zn(2+): cysteine 333, histidine 384, and histidine 510.

The protein belongs to the class-II aminoacyl-tRNA synthetase family. As to quaternary structure, homodimer. The cofactor is Zn(2+).

The protein resides in the cytoplasm. The catalysed reaction is tRNA(Thr) + L-threonine + ATP = L-threonyl-tRNA(Thr) + AMP + diphosphate + H(+). In terms of biological role, catalyzes the attachment of threonine to tRNA(Thr) in a two-step reaction: L-threonine is first activated by ATP to form Thr-AMP and then transferred to the acceptor end of tRNA(Thr). Also edits incorrectly charged L-seryl-tRNA(Thr). This Teredinibacter turnerae (strain ATCC 39867 / T7901) protein is Threonine--tRNA ligase.